Here is a 309-residue protein sequence, read N- to C-terminus: Probable pathogenesis-related protein ARB_02861 (309 aa).

An N-terminal signal peptide occupies residues 1–17 (MKSSVLMTALCVAGSLA). Low complexity predominate over residues 47 to 59 (CPTVIPTTSYKPE). The segment at 47–152 (CPTVIPTTSY…PPPPGKDYKE (106 aa)) is disordered. Pro residues-rich tracts occupy residues 61–92 (TSKP…PCPE) and 99–147 (APPP…PPPG). The SCP domain maps to 154-284 (AGYHHNVHRS…GDAYYTVCNY (131 aa)). The N-linked (GlcNAc...) asparagine glycan is linked to N164.

The protein belongs to the CRISP family.

The protein resides in the secreted. Its function is as follows. Secreted protein required for efficient export of lipids such as acetylated sterols. Acts in detoxification of hydrophobic compounds. This Arthroderma benhamiae (strain ATCC MYA-4681 / CBS 112371) (Trichophyton mentagrophytes) protein is Probable pathogenesis-related protein ARB_02861.